A 222-amino-acid polypeptide reads, in one-letter code: LHFPL tetraspan subfamily member 3 protein (222 aa).

Helical transmembrane passes span 22–42 (IGVL…VCFI), 96–116 (FFIG…TLFF), 126–146 (ICAW…MIFP), and 177–197 (ILAI…VVLG).

Belongs to the LHFP family. As to expression, brain-specific.

It localises to the membrane. The chain is LHFPL tetraspan subfamily member 3 protein from Mus musculus (Mouse).